We begin with the raw amino-acid sequence, 949 residues long: Copper-transporting ATPase PAA1, chloroplastic (949 aa).

A chloroplast-targeting transit peptide spans methionine 1–serine 103. Over residues tyrosine 113–glutamate 126 the composition is skewed to gly residues. The disordered stretch occupies residues tyrosine 113 to valine 142. The 75-residue stretch at aspartate 148–threonine 222 folds into the HMA domain. Cu(+) contacts are provided by cysteine 159 and cysteine 162. 6 consecutive transmembrane segments (helical) span residues leucine 253–valine 274, phenylalanine 287–aspartate 306, glycine 314–serine 334, glutamate 349–lysine 369, valine 502–phenylalanine 524, and leucine 543–leucine 560. Aspartate 598 (4-aspartylphosphate intermediate) is an active-site residue. Glycine 807 to alanine 814 is an ATP binding site. Mg(2+) contacts are provided by aspartate 808 and aspartate 812. Helical transmembrane passes span lysine 863–glycine 882 and serine 895–leucine 913. The interval aspartate 925–serine 949 is disordered.

The protein belongs to the cation transport ATPase (P-type) (TC 3.A.3) family. Type IB subfamily. Expressed in the shoots and roots.

Its subcellular location is the plastid. It is found in the chloroplast membrane. It carries out the reaction Cu(+)(in) + ATP + H2O = Cu(+)(out) + ADP + phosphate + H(+). Its function is as follows. Mediates copper transfer across the plastid envelope. Required for the delivery of copper into the plastid stroma, which is essential for the function of copper proteins. Seems to be selective for monovalent copper Cu(+) transport. Also plays a role in glucose signaling-mediated cell proliferation of root meristem in non-green tissues. This chain is Copper-transporting ATPase PAA1, chloroplastic (PAA1), found in Arabidopsis thaliana (Mouse-ear cress).